Consider the following 671-residue polypeptide: DNA ligase (671 aa).

Residues aspartate 31 to aspartate 35, serine 80 to leucine 81, and glutamate 110 each bind NAD(+). Residue lysine 112 is the N6-AMP-lysine intermediate of the active site. The NAD(+) site is built by arginine 133, glutamate 167, lysine 283, and lysine 307. Positions 401, 404, 419, and 424 each coordinate Zn(2+). Residues glutamate 587–glutamate 671 enclose the BRCT domain.

The protein belongs to the NAD-dependent DNA ligase family. LigA subfamily. The cofactor is Mg(2+). It depends on Mn(2+) as a cofactor.

The catalysed reaction is NAD(+) + (deoxyribonucleotide)n-3'-hydroxyl + 5'-phospho-(deoxyribonucleotide)m = (deoxyribonucleotide)n+m + AMP + beta-nicotinamide D-nucleotide.. DNA ligase that catalyzes the formation of phosphodiester linkages between 5'-phosphoryl and 3'-hydroxyl groups in double-stranded DNA using NAD as a coenzyme and as the energy source for the reaction. It is essential for DNA replication and repair of damaged DNA. This is DNA ligase from Listeria monocytogenes serotype 4b (strain F2365).